We begin with the raw amino-acid sequence, 373 residues long: Anhydro-N-acetylmuramic acid kinase (373 aa).

13 to 20 (GTSMDGID) contributes to the ATP binding site.

The protein belongs to the anhydro-N-acetylmuramic acid kinase family.

The catalysed reaction is 1,6-anhydro-N-acetyl-beta-muramate + ATP + H2O = N-acetyl-D-muramate 6-phosphate + ADP + H(+). It participates in amino-sugar metabolism; 1,6-anhydro-N-acetylmuramate degradation. It functions in the pathway cell wall biogenesis; peptidoglycan recycling. In terms of biological role, catalyzes the specific phosphorylation of 1,6-anhydro-N-acetylmuramic acid (anhMurNAc) with the simultaneous cleavage of the 1,6-anhydro ring, generating MurNAc-6-P. Is required for the utilization of anhMurNAc either imported from the medium or derived from its own cell wall murein, and thus plays a role in cell wall recycling. This Agrobacterium fabrum (strain C58 / ATCC 33970) (Agrobacterium tumefaciens (strain C58)) protein is Anhydro-N-acetylmuramic acid kinase.